The primary structure comprises 147 residues: Acidic phospholipase A2 S7-48J (147 aa).

The signal sequence occupies residues 1 to 19 (MYPAHLLVLLAVCVSLLGA). Residues 20 to 27 (SDIPPQPL) constitute a propeptide that is removed on maturation. Cystine bridges form between Cys-38–Cys-99, Cys-54–Cys-146, Cys-56–Cys-72, Cys-71–Cys-127, Cys-78–Cys-120, Cys-88–Cys-113, and Cys-106–Cys-118. Tyr-55, Gly-57, and Gly-59 together coordinate Ca(2+). Residue His-75 is part of the active site. Position 76 (Asp-76) interacts with Ca(2+). Asp-121 is an active-site residue.

Belongs to the phospholipase A2 family. Group I subfamily. D49 sub-subfamily. Ca(2+) serves as cofactor. Expressed by the venom gland.

The protein resides in the secreted. It carries out the reaction a 1,2-diacyl-sn-glycero-3-phosphocholine + H2O = a 1-acyl-sn-glycero-3-phosphocholine + a fatty acid + H(+). Snake venom phospholipase A2 (PLA2) that inhibits collagen-induced platelet aggregation. PLA2 catalyzes the calcium-dependent hydrolysis of the 2-acyl groups in 3-sn-phosphoglycerides. The protein is Acidic phospholipase A2 S7-48J of Austrelaps superbus (Lowland copperhead snake).